Here is a 194-residue protein sequence, read N- to C-terminus: MPHEPKGLNEECGVFGVWGNPNAASITHLGLHTLQHRGQEGAGIVGLTKDGMRRHYGLGLLSEVFTNTDQLTPLIGRAALGHVRYSTAGGRVLENIQPLLFRFSDEAIALAHNGNLTNAISLRRQLEDQGAIFQSTSDTEVLMHLIRRQVGQPWLTQLKTALNEVHGGFAFVLLTEHGLYAAVDPHGFRPMVVG.

A propeptide spanning residues 1–11 is cleaved from the precursor; that stretch reads MPHEPKGLNEE. Cysteine 12 serves as the catalytic Nucleophile. The Glutamine amidotransferase type-2 domain occupies 12–194; the sequence is CGVFGVWGNP…PHGFRPMVVG (183 aa).

This sequence in the C-terminal section; belongs to the purine/pyrimidine phosphoribosyltransferase family.

The catalysed reaction is 5-phospho-beta-D-ribosylamine + L-glutamate + diphosphate = 5-phospho-alpha-D-ribose 1-diphosphate + L-glutamine + H2O. It participates in purine metabolism; IMP biosynthesis via de novo pathway; N(1)-(5-phospho-D-ribosyl)glycinamide from 5-phospho-alpha-D-ribose 1-diphosphate: step 1/2. Its function is as follows. Catalyzes the formation of phosphoribosylamine from phosphoribosylpyrophosphate (PRPP) and glutamine. This chain is Amidophosphoribosyltransferase, found in Lacticaseibacillus casei (Lactobacillus casei).